Reading from the N-terminus, the 260-residue chain is Emerin (260 aa).

N-acetylmethionine is present on Met1. The region spanning 1–45 (MDDYAVLSDTELAAVLRQYNIPHGPILGSTRKLYEKKIFEYETQR) is the LEM domain. Phosphoserine occurs at positions 8 and 29. Positions 46-224 (RRLSPPSSSS…PTAALGQDRQ (179 aa)) are interaction with F-actin. Position 49 is a phosphoserine; by PKA (Ser49). Phosphoserine is present on residues Ser54, Ser69, Ser72, Ser88, Ser99, Ser142, Ser143, and Ser144. Position 162 is a phosphotyrosine (Tyr162). An interaction with CTNNB1 region spans residues 169-188 (RPISNVSRSSLGLSYYPRSS). Phosphoserine is present on residues Ser172, Ser175, and Ser177. Positions 184–206 (YPRSSTSSVSSSSSSPSSWLTRR) are disordered. The segment covering 187–201 (SSTSSVSSSSSSPSS) has biased composition (low complexity). Residues 225–245 (VPLWGQLLLFLAFATFLLFVY) traverse the membrane as a helical segment.

In terms of assembly, interacts with lamins A and C, BANF1, GMCL, BCLAF1 and YTHDC1/YT521. Interacts with TMEM43; the interaction retains emerin in the inner nuclear membrane. Interacts with ACTB, SPTAN1, F-actin, CTNNB1 and beta-tubulin. Interacts with SUN1 and SUN2. Interacts with TMEM201. Interacts with NEMP1.

Its subcellular location is the nucleus inner membrane. The protein resides in the nucleus outer membrane. Stabilizes and promotes the formation of a nuclear actin cortical network. Stimulates actin polymerization in vitro by binding and stabilizing the pointed end of growing filaments. Inhibits beta-catenin activity by preventing its accumulation in the nucleus. Acts by influencing the nuclear accumulation of beta-catenin through a CRM1-dependent export pathway. Links centrosomes to the nuclear envelope via a microtubule association. Required for proper localization of non-farnesylated prelamin-A/C. Together with NEMP1, contributes to nuclear envelope stiffness in germ cells. This is Emerin (Emd) from Rattus norvegicus (Rat).